The primary structure comprises 169 residues: Caltractin (169 aa).

The interval 1 to 24 (MSYRKTVVSARRDQKKGRVGGLTE) is disordered. 4 EF-hand domains span residues 25–60 (EQKQEIREAFDLFDTDGSGTIDAKELKVAMRALGFE), 61–96 (PKKEEIKKMIADIDKAGSGTIDFEEFLQMMTSKMGE), 98–133 (DSREEIIKAFKLFDDDNTGFITLKNLKRVAKELGEN), and 134–169 (LTDEELQEMTDEADRNGDGQIDEDEFYRIMKKTSLF). Ca(2+) is bound by residues Asp38, Asp40, Ser42, Thr44, and Glu49. Ca(2+) contacts are provided by Asp147, Asn149, Asp151, Gln153, and Glu158.

Belongs to the centrin family.

Its function is as follows. This calcium-binding protein is found in the basal body complexes (the functional homolog of the centrosome in animal cell). In mitotic cells it is specifically associated with the poles of the mitotic spindles at the sites of the duplicated basal body complexes. This chain is Caltractin, found in Dunaliella salina (Green alga).